The sequence spans 401 residues: Enoyl-[acyl-carrier-protein] reductase [NADH] 1 (401 aa).

Residues Gly-48–Tyr-53, Phe-74–Glu-75, Asp-111–Ala-112, and Leu-139–Ala-140 contribute to the NAD(+) site. Tyr-225 contacts substrate. Catalysis depends on Tyr-235, which acts as the Proton donor. Residues Lys-244 and Val-273–Thr-275 contribute to the NAD(+) site.

The protein belongs to the TER reductase family. Monomer.

The catalysed reaction is a 2,3-saturated acyl-[ACP] + NAD(+) = a (2E)-enoyl-[ACP] + NADH + H(+). It carries out the reaction a 2,3-saturated acyl-CoA + NAD(+) = a (2E)-enoyl-CoA + NADH + H(+). The enzyme catalyses (2E)-butenoyl-[ACP] + NADH + H(+) = butanoyl-[ACP] + NAD(+). It catalyses the reaction butanoyl-CoA + NAD(+) = (2E)-butenoyl-CoA + NADH + H(+). The protein operates within lipid metabolism; fatty acid biosynthesis. With respect to regulation, weakly inhibited by triclosan. Its function is as follows. Involved in the final reduction of the elongation cycle of fatty acid synthesis (FAS II). Catalyzes the NADH-dependent reduction of a carbon-carbon double bond in an enoyl moiety that is covalently linked to an acyl carrier protein (ACP). It can use both crotonyl-CoA and crotonyl-ACP. This chain is Enoyl-[acyl-carrier-protein] reductase [NADH] 1, found in Vibrio cholerae serotype O1 (strain ATCC 39315 / El Tor Inaba N16961).